A 406-amino-acid polypeptide reads, in one-letter code: Succinyl-diaminopimelate desuccinylase (406 aa).

Histidine 95 serves as a coordination point for Zn(2+). Aspartate 97 is an active-site residue. A Zn(2+)-binding site is contributed by aspartate 128. Residue glutamate 162 is the Proton acceptor of the active site. Zn(2+) contacts are provided by glutamate 163, glutamate 191, and histidine 377.

Belongs to the peptidase M20A family. DapE subfamily. Homodimer. It depends on Zn(2+) as a cofactor. Co(2+) serves as cofactor.

The catalysed reaction is N-succinyl-(2S,6S)-2,6-diaminopimelate + H2O = (2S,6S)-2,6-diaminopimelate + succinate. The protein operates within amino-acid biosynthesis; L-lysine biosynthesis via DAP pathway; LL-2,6-diaminopimelate from (S)-tetrahydrodipicolinate (succinylase route): step 3/3. Its function is as follows. Catalyzes the hydrolysis of N-succinyl-L,L-diaminopimelic acid (SDAP), forming succinate and LL-2,6-diaminopimelate (DAP), an intermediate involved in the bacterial biosynthesis of lysine and meso-diaminopimelic acid, an essential component of bacterial cell walls. The protein is Succinyl-diaminopimelate desuccinylase of Polaromonas naphthalenivorans (strain CJ2).